We begin with the raw amino-acid sequence, 116 residues long: Large ribosomal subunit protein bL20 (116 aa).

It belongs to the bacterial ribosomal protein bL20 family.

Its function is as follows. Binds directly to 23S ribosomal RNA and is necessary for the in vitro assembly process of the 50S ribosomal subunit. It is not involved in the protein synthesizing functions of that subunit. This is Large ribosomal subunit protein bL20 from Nautilia profundicola (strain ATCC BAA-1463 / DSM 18972 / AmH).